The primary structure comprises 338 residues: Ketol-acid reductoisomerase (NADP(+)) (338 aa).

A KARI N-terminal Rossmann domain is found at M1–T181. Residues Y24–Q27, R47, S50, S52, and D82–Q85 each bind NADP(+). H107 is a catalytic residue. An NADP(+)-binding site is contributed by G133. Residues T182–I327 form the KARI C-terminal knotted domain. D190, E194, E226, and E230 together coordinate Mg(2+). S251 provides a ligand contact to substrate.

It belongs to the ketol-acid reductoisomerase family. The cofactor is Mg(2+).

It carries out the reaction (2R)-2,3-dihydroxy-3-methylbutanoate + NADP(+) = (2S)-2-acetolactate + NADPH + H(+). It catalyses the reaction (2R,3R)-2,3-dihydroxy-3-methylpentanoate + NADP(+) = (S)-2-ethyl-2-hydroxy-3-oxobutanoate + NADPH + H(+). The protein operates within amino-acid biosynthesis; L-isoleucine biosynthesis; L-isoleucine from 2-oxobutanoate: step 2/4. Its pathway is amino-acid biosynthesis; L-valine biosynthesis; L-valine from pyruvate: step 2/4. Functionally, involved in the biosynthesis of branched-chain amino acids (BCAA). Catalyzes an alkyl-migration followed by a ketol-acid reduction of (S)-2-acetolactate (S2AL) to yield (R)-2,3-dihydroxy-isovalerate. In the isomerase reaction, S2AL is rearranged via a Mg-dependent methyl migration to produce 3-hydroxy-3-methyl-2-ketobutyrate (HMKB). In the reductase reaction, this 2-ketoacid undergoes a metal-dependent reduction by NADPH to yield (R)-2,3-dihydroxy-isovalerate. In Hahella chejuensis (strain KCTC 2396), this protein is Ketol-acid reductoisomerase (NADP(+)).